The sequence spans 449 residues: MKKGLTLDLSKTQAFVKDYELDYMEGMVKDSHDRLHSKTGQGNDFLGWIDLPVDYDKEEFARIKKAAEKIQSDSDVLVVIGIGGSYLGARAAIEMLTSNFHNVLDDNKRKVPKIFYAGNNISSTYMAELLEAIDGKDVSVNVISKSGTTTEPAIAFRIFKSYLEKKYGVEEARKRIYATTDKSRGALKSLADAEGYETFVIPDDVGGRFTVLTPVGLLPIAVAGINIDEMMQGAADARESYSNPSLKENDCYKYAVTRNALYNKGKEIEVLVNYEPCIHYFNEWWKQLYGESEGKDKKGLFPAAVDFSTDLHSMGQYIQDGRRNLFETVINVEKARKEITIEFSEGDLDGLNFLTGKTMDFVNNKAFQGTLLAHNDGEVPNMVLNVPELSPYYFGHMVYFFEKACGISGYLLGINPFDQPGVEAYKKNMFALLGKPGYEDMKDELEKRL.

Catalysis depends on Glu-291, which acts as the Proton donor. Active-site residues include His-312 and Lys-426.

It belongs to the GPI family.

It localises to the cytoplasm. It carries out the reaction alpha-D-glucose 6-phosphate = beta-D-fructose 6-phosphate. It functions in the pathway carbohydrate biosynthesis; gluconeogenesis. Its pathway is carbohydrate degradation; glycolysis; D-glyceraldehyde 3-phosphate and glycerone phosphate from D-glucose: step 2/4. Its function is as follows. Catalyzes the reversible isomerization of glucose-6-phosphate to fructose-6-phosphate. This Clostridium botulinum (strain Alaska E43 / Type E3) protein is Glucose-6-phosphate isomerase.